The primary structure comprises 361 residues: 3-dehydroquinate synthase (361 aa).

It belongs to the archaeal-type DHQ synthase family.

The enzyme catalyses 2-amino-2,3,7-trideoxy-D-lyxo-hept-6-ulosonate + NAD(+) + H2O = 3-dehydroquinate + NH4(+) + NADH + H(+). In terms of biological role, catalyzes the oxidative deamination and cyclization of 2-amino-3,7-dideoxy-D-threo-hept-6-ulosonic acid (ADH) to yield 3-dehydroquinate (DHQ), which is fed into the canonical shikimic pathway of aromatic amino acid biosynthesis. The polypeptide is 3-dehydroquinate synthase (Methanococcus vannielii (strain ATCC 35089 / DSM 1224 / JCM 13029 / OCM 148 / SB)).